Consider the following 286-residue polypeptide: Polyamine aminopropyltransferase (286 aa).

One can recognise a PABS domain in the interval 5-238; the sequence is PLWHETLHDH…GIMTFAWASD (234 aa). Gln-33 provides a ligand contact to S-methyl-5'-thioadenosine. Spermidine is bound by residues His-64 and Asp-88. S-methyl-5'-thioadenosine contacts are provided by residues Glu-108 and 140–141; that span reads DG. Asp-158 serves as the catalytic Proton acceptor. 158–161 contributes to the spermidine binding site; it reads DCTD. Pro-165 contributes to the S-methyl-5'-thioadenosine binding site.

The protein belongs to the spermidine/spermine synthase family. As to quaternary structure, homodimer or homotetramer.

It is found in the cytoplasm. The enzyme catalyses S-adenosyl 3-(methylsulfanyl)propylamine + putrescine = S-methyl-5'-thioadenosine + spermidine + H(+). Its pathway is amine and polyamine biosynthesis; spermidine biosynthesis; spermidine from putrescine: step 1/1. Its function is as follows. Catalyzes the irreversible transfer of a propylamine group from the amino donor S-adenosylmethioninamine (decarboxy-AdoMet) to putrescine (1,4-diaminobutane) to yield spermidine. The sequence is that of Polyamine aminopropyltransferase from Klebsiella pneumoniae (strain 342).